Reading from the N-terminus, the 1689-residue chain is Cullin-7 (1689 aa).

The 74-residue stretch at 349 to 422 folds into the CPH domain; the sequence is RASFASFNTY…HWHMLEILGF (74 aa). The region spanning 793–972 is the DOC domain; it reads PIQIPFFDVF…HTRLFYMVRA (180 aa). Residues 1321 to 1337 show a composition bias toward basic and acidic residues; it reads VAHEDSGREDKSKKEEA. A disordered region spans residues 1321-1371; that stretch reads VAHEDSGREDKSKKEEAIGEAAAVAMAEEEDQGKKEEGEEEGEGEDEEEER. The segment covering 1358–1370 has biased composition (acidic residues); that stretch reads GEEEGEGEDEEEE. Residue K1567 forms a Glycyl lysine isopeptide (Lys-Gly) (interchain with G-Cter in NEDD8) linkage.

This sequence belongs to the cullin family. As to quaternary structure, component of the 3M complex, composed of core components CUL7, CCDC8 and OBSL1. Component of the Cul7-RING(FBXW8) complex consisting of CUL7, RBX1, SKP1 and FBXW8. Within the Cul7-RING(FBXW8) complex interacts with FBXW8 and RBX1, but not with SKP1. Interacts with CUL1 (via the C-terminal domain); the interaction seems to be mediated by FBXW8; it is likely specific to FBXW8, but not other F-box proteins. Interacts (via the CPH domain) with p53/TP53; the interaction preferentially involves tetrameric and dimeric p53/TP53; this interaction recruits p53/TP53 for ubiquitination by neddylated CUL1-RBX1. The CUL7-CUL9 heterodimer seems to interact specifically with p53/TP53. Interacts with FBXW8; interaction is mutually exclusive of binding to CUL9 or p53/TP53. Interacts with CUL9; leading to inhibited CUL9 activity. Interacts with OBSL1. Interacts (as part of the 3M complex) with HDAC4 and HDAC5; it is negatively regulated by ANKRA2.

The protein localises to the cytoplasm. It localises to the cytoskeleton. Its subcellular location is the microtubule organizing center. The protein resides in the centrosome. It is found in the perinuclear region. The protein localises to the golgi apparatus. It functions in the pathway protein modification; protein ubiquitination. Functionally, core component of the 3M and Cul7-RING(FBXW8) complexes, which mediate the ubiquitination and subsequent proteasomal degradation of target proteins. Core component of the 3M complex, a complex required to regulate microtubule dynamics and genome integrity. It is unclear how the 3M complex regulates microtubules, it could act by controlling the level of a microtubule stabilizer. The Cul7-RING(FBXW8) complex alone lacks ubiquitination activity and does not promote polyubiquitination and proteasomal degradation of p53/TP53. However it mediates recruitment of p53/TP53 for ubiquitination by neddylated CUL1-RBX1. Interaction with CUL9 is required to inhibit CUL9 activity and ubiquitination of BIRC5. The Cul7-RING(FBXW8) complex also mediates ubiquitination and consequent degradation of target proteins such as GORASP1, IRS1 and MAP4K1/HPK1. Ubiquitination of GORASP1 regulates Golgi morphogenesis and dendrite patterning in brain. Mediates ubiquitination and degradation of IRS1 in a mTOR-dependent manner: the Cul7-RING(FBXW8) complex recognizes and binds IRS1 previously phosphorylated by S6 kinase (RPS6KB1 or RPS6KB2). The Cul7-RING(FBXW8) complex also mediates ubiquitination of MAP4K1/HPK1: recognizes and binds autophosphorylated MAP4K1/HPK1, leading to its degradation, thereby affecting cell proliferation and differentiation. Acts as a regulator in trophoblast cell epithelial-mesenchymal transition and placental development. While the Cul7-RING(FBXW8) and the 3M complexes are associated and involved in common processes, CUL7 and the Cul7-RING(FBXW8) complex may have additional functions. Probably plays a role in the degradation of proteins involved in endothelial proliferation and/or differentiation. The chain is Cullin-7 (Cul7) from Mus musculus (Mouse).